Consider the following 450-residue polypeptide: Calcium-binding and coiled-coil domain-containing protein 2 (450 aa).

A CLIR motif is present at residues 133-136 (ILVV). Residues 135 to 349 (VVTTQSEVEE…RENNRLLSYM (215 aa)) adopt a coiled-coil conformation. An LIR-like motif is present at residues 203–206 (DCWE). The tract at residues 371 to 381 (DPGLVFGNPYS) is interaction with LGALS8. The tract at residues 395–450 (KKCPTCKSDFAADVFDHNLALEQHLQTLSLNCPICDKTFPAKEKQIFEDHVFCHTL) is interaction with MYO6. A UBZ1-type zinc finger spans residues 423-448 (SLNCPICDKTFPAKEKQIFEDHVFCH). Zn(2+)-binding residues include C426, C429, H444, and H448.

Belongs to the CALCOCO family. In terms of assembly, dimer. Part of a complex consisting of CALCOCO2, TAX1BP1 and MYO6. Interacts with GEMIN4. Interacts with ATG8 family members MAP1LC3A, MAP1LC3B, GABARAP, GABARAPL1 and GABARAPL2. Interacts with ATG8 family member MAP1LC3C. Interacts with LGALS8. Interacts with TOM1; the interaction is indirect and is mediated by MYO6, which acts as a bridge between TOM1 and CALCOCO2. Interacts with AZI2.

The protein localises to the cytoplasm. The protein resides in the perinuclear region. It localises to the cytoskeleton. It is found in the cytoplasmic vesicle. Its subcellular location is the autophagosome membrane. Its function is as follows. Xenophagy-specific receptor required for autophagy-mediated intracellular bacteria degradation. Acts as an effector protein of galectin-sensed membrane damage that restricts the proliferation of infecting pathogens upon entry into the cytosol by targeting LGALS8-associated bacteria for autophagy. Initially orchestrates bacteria targeting to autophagosomes and subsequently ensures pathogen degradation by regulating pathogen-containing autophagosome maturation. Bacteria targeting to autophagosomes relies on its interaction with MAP1LC3A, MAP1LC3B and/or GABARAPL2, whereas regulation of pathogen-containing autophagosome maturation requires the interaction with MAP3LC3C. May play a role in ruffle formation and actin cytoskeleton organization and seems to negatively regulate constitutive secretion. In Bos taurus (Bovine), this protein is Calcium-binding and coiled-coil domain-containing protein 2.